A 258-amino-acid polypeptide reads, in one-letter code: 3-deoxy-manno-octulosonate cytidylyltransferase (258 aa).

The protein belongs to the KdsB family.

It localises to the cytoplasm. It catalyses the reaction 3-deoxy-alpha-D-manno-oct-2-ulosonate + CTP = CMP-3-deoxy-beta-D-manno-octulosonate + diphosphate. Its pathway is nucleotide-sugar biosynthesis; CMP-3-deoxy-D-manno-octulosonate biosynthesis; CMP-3-deoxy-D-manno-octulosonate from 3-deoxy-D-manno-octulosonate and CTP: step 1/1. The protein operates within bacterial outer membrane biogenesis; lipopolysaccharide biosynthesis. In terms of biological role, activates KDO (a required 8-carbon sugar) for incorporation into bacterial lipopolysaccharide in Gram-negative bacteria. The protein is 3-deoxy-manno-octulosonate cytidylyltransferase of Blochmanniella floridana.